The chain runs to 443 residues: MSSLTNPNIFTVSRLNSEVRLLLENQLGIVWLVGEISNFSAPVSGHWYFTLKDSMAQVKCAMFRGNNRLVSFKPTNGNQVLVKARLSLYEPRGDYQLIIESMQPEGDGRLQQQFDALKMKLASEGLFAQSSKQAIPEHPKCVGIITSKTGAALYDILDVLKRRDPSLPVVIYPTLVQGEEAAIQIAQAIGRANSRNECDVLIVGRGGGSLEDLWCFNNEIVARTIAASQIPIISAVGHEIDVTIADFVADLRAPTPSAAAELVSRDNSHKDQALMSREQKLRAAWRHYLTEQNRTIVSLSHRLEKQHPRYRLMRQTQQADELQIRLQRAMEKYLAQREQKVSRVQHKLQLLSPVRQISEQKNALARVEQKMMDAMDRKLLRLRHQIAIAAEKLDTVSPLATLKRGYSITQSESGDVITRQSQIKTGDTLVTRLSDGEIRSTVN.

Belongs to the XseA family. In terms of assembly, heterooligomer composed of large and small subunits.

It is found in the cytoplasm. It carries out the reaction Exonucleolytic cleavage in either 5'- to 3'- or 3'- to 5'-direction to yield nucleoside 5'-phosphates.. In terms of biological role, bidirectionally degrades single-stranded DNA into large acid-insoluble oligonucleotides, which are then degraded further into small acid-soluble oligonucleotides. This chain is Exodeoxyribonuclease 7 large subunit, found in Vibrio vulnificus (strain CMCP6).